Consider the following 504-residue polypeptide: Probable chlorophyll(ide) b reductase NYC1, chloroplastic (504 aa).

The N-terminal 33 residues, M1 to R33, are a transit peptide targeting the chloroplast. A disordered region spans residues A41–R63. The next 2 helical transmembrane spans lie at Y114–G134 and L141–V161. I175–I199 serves as a coordination point for NAD(+). Residue Y339 is the Proton acceptor of the active site. A helical membrane pass occupies residues W479–G499.

It belongs to the short-chain dehydrogenases/reductases (SDR) family. In terms of assembly, interacts with NOL to form a complex that acts as a chlorophyll b reductase. As to expression, expressed in leaves and stems. Also detected in non-photosynthetic tissues such as roots.

It is found in the plastid. The protein resides in the chloroplast thylakoid membrane. The enzyme catalyses 7(1)-hydroxychlorophyllide a + NAD(+) = chlorophyllide b + NADH + H(+). It carries out the reaction 7(1)-hydroxychlorophyllide a + NADP(+) = chlorophyllide b + NADPH + H(+). Functionally, required for proper chloroplast degradation. Involved in chlorophyll b degradation. This Oryza sativa subsp. japonica (Rice) protein is Probable chlorophyll(ide) b reductase NYC1, chloroplastic (NYC1).